Here is a 94-residue protein sequence, read N- to C-terminus: UPF0235 protein Dred_0717 (94 aa).

It belongs to the UPF0235 family.

In Desulforamulus reducens (strain ATCC BAA-1160 / DSM 100696 / MI-1) (Desulfotomaculum reducens), this protein is UPF0235 protein Dred_0717.